A 132-amino-acid polypeptide reads, in one-letter code: Large ribosomal subunit protein uL24 (132 aa).

Belongs to the universal ribosomal protein uL24 family. Part of the 50S ribosomal subunit.

One of two assembly initiator proteins, it binds directly to the 5'-end of the 23S rRNA, where it nucleates assembly of the 50S subunit. Functionally, located at the polypeptide exit tunnel on the outside of the subunit. This Aeropyrum pernix (strain ATCC 700893 / DSM 11879 / JCM 9820 / NBRC 100138 / K1) protein is Large ribosomal subunit protein uL24.